Reading from the N-terminus, the 303-residue chain is MTKTQLHLNNFLTLAQEAGSLPKLAKLCGYRTPVALYKLKQRLEKQAEDPDARGIRPSLMAKLEKHTGKPKGWLDRKHRERTVPETAAESTGTAETRIAETASAAGCRSVTVNRNTCETQITVSINLDGSGKSRLDTGVPFLEHMIDQIARHGMIDIDISCKGDLHIDDHHTAEDIGITLGQAIRQALGDKKGIRRYGHSYVPLDEALSRVVIDLSGRPGLVYNIEFTRTLIGRFDVDLFEEFFHGIVNHSMMTLHIDNLSGKNAHHQAETVFKAFGRALRMAVEHDPRMAGQTPSTKGTLTA.

Belongs to the imidazoleglycerol-phosphate dehydratase family.

The protein resides in the cytoplasm. It carries out the reaction D-erythro-1-(imidazol-4-yl)glycerol 3-phosphate = 3-(imidazol-4-yl)-2-oxopropyl phosphate + H2O. It participates in amino-acid biosynthesis; L-histidine biosynthesis; L-histidine from 5-phospho-alpha-D-ribose 1-diphosphate: step 6/9. The chain is Imidazoleglycerol-phosphate dehydratase from Neisseria gonorrhoeae (strain ATCC 700825 / FA 1090).